Consider the following 229-residue polypeptide: Ribosome maturation factor RimM (229 aa).

The segment at 1 to 37 is disordered; sequence MAGHDSGNAKRGRSPSFGVFVRKPVERTSAKGTSDGA. Residues 148-229 enclose the PRC barrel domain; the sequence is ADEFYWVDLI…RVVVDWEADY (82 aa).

Belongs to the RimM family. As to quaternary structure, binds ribosomal protein uS19.

The protein resides in the cytoplasm. An accessory protein needed during the final step in the assembly of 30S ribosomal subunit, possibly for assembly of the head region. Essential for efficient processing of 16S rRNA. May be needed both before and after RbfA during the maturation of 16S rRNA. It has affinity for free ribosomal 30S subunits but not for 70S ribosomes. The sequence is that of Ribosome maturation factor RimM from Burkholderia pseudomallei (strain 668).